Reading from the N-terminus, the 235-residue chain is Small ribosomal subunit protein uS2 (235 aa).

It belongs to the universal ribosomal protein uS2 family.

This Geobacillus kaustophilus (strain HTA426) protein is Small ribosomal subunit protein uS2.